Reading from the N-terminus, the 84-residue chain is MKQGIHPEYHQVIFLDTTTNFKFLSGSTKTSSEMMEWEDGKEYPVIRLDISSDSHPFYTGRQKFAAADGRVERFNKKFGLKSNN.

Belongs to the bacterial ribosomal protein bL31 family. Type B subfamily. As to quaternary structure, part of the 50S ribosomal subunit.

The sequence is that of Large ribosomal subunit protein bL31B from Staphylococcus aureus (strain Mu3 / ATCC 700698).